A 197-amino-acid chain; its full sequence is ATP-dependent Clp protease proteolytic subunit (197 aa).

The active-site Nucleophile is S98. H123 is an active-site residue.

It belongs to the peptidase S14 family. Fourteen ClpP subunits assemble into 2 heptameric rings which stack back to back to give a disk-like structure with a central cavity, resembling the structure of eukaryotic proteasomes.

It localises to the cytoplasm. It catalyses the reaction Hydrolysis of proteins to small peptides in the presence of ATP and magnesium. alpha-casein is the usual test substrate. In the absence of ATP, only oligopeptides shorter than five residues are hydrolyzed (such as succinyl-Leu-Tyr-|-NHMec, and Leu-Tyr-Leu-|-Tyr-Trp, in which cleavage of the -Tyr-|-Leu- and -Tyr-|-Trp bonds also occurs).. Functionally, cleaves peptides in various proteins in a process that requires ATP hydrolysis. Has a chymotrypsin-like activity. Plays a major role in the degradation of misfolded proteins. This Anaplasma phagocytophilum (strain HZ) protein is ATP-dependent Clp protease proteolytic subunit.